A 354-amino-acid chain; its full sequence is MTELKNDRYLRALLRQPVDVTPVWMMRQAGRYLPEYKATRAQAGDFMSLCKNAELACEVTLQPLRRYPLDAAILFSDILTVPDAMGLGLYFEAGEGPRFTSPVTCKADVDKLPIPDPEDELGYVMNAVRTIRRELKGEVPLIGFSGSPWTLATYMVEGGSSKAFTVIKKMMYADPQALHALLDKLAKSVTLYLNAQIKAGAQAVMIFDTWGGVLTGRDYQQFSLYYMHKIVNGLLRENDGRRVPVTLFTKGGGQWLEAMAETGCDALGLDWTTDIADARRRVGNKVALQGNMDPSMLYAPPARIEEEVASILAGFGHGEGHVFNLGHGIHQDVPPEHAGVFVEAVHRLSEQYHR.

Residues 27 to 31, Asp-77, Tyr-154, Thr-209, and His-327 contribute to the substrate site; that span reads RQAGR.

The protein belongs to the uroporphyrinogen decarboxylase family. In terms of assembly, homodimer.

The protein resides in the cytoplasm. The enzyme catalyses uroporphyrinogen III + 4 H(+) = coproporphyrinogen III + 4 CO2. The protein operates within porphyrin-containing compound metabolism; protoporphyrin-IX biosynthesis; coproporphyrinogen-III from 5-aminolevulinate: step 4/4. Catalyzes the decarboxylation of four acetate groups of uroporphyrinogen-III to yield coproporphyrinogen-III. This is Uroporphyrinogen decarboxylase from Escherichia coli O81 (strain ED1a).